The primary structure comprises 342 residues: Growth hormone-regulated TBC protein 1 (342 aa).

The region spanning 72–263 (GIPNEHRSHV…RIWDCLFFEG (192 aa)) is the Rab-GAP TBC domain.

May act as a GTPase-activating protein for Rab family protein(s). This chain is Growth hormone-regulated TBC protein 1 (grtp1), found in Xenopus tropicalis (Western clawed frog).